The sequence spans 518 residues: Glutamate--cysteine ligase (518 aa).

It belongs to the glutamate--cysteine ligase type 1 family. Type 1 subfamily.

The enzyme catalyses L-cysteine + L-glutamate + ATP = gamma-L-glutamyl-L-cysteine + ADP + phosphate + H(+). It functions in the pathway sulfur metabolism; glutathione biosynthesis; glutathione from L-cysteine and L-glutamate: step 1/2. The chain is Glutamate--cysteine ligase from Citrobacter koseri (strain ATCC BAA-895 / CDC 4225-83 / SGSC4696).